The chain runs to 717 residues: Amino-acid acetyltransferase, mitochondrial (717 aa).

Residues 1 to 23 constitute a mitochondrion transit peptide; that stretch reads MFIWTKAPARGLGKASKILPKRD. The interval 35 to 70 is disordered; it reads KQFHTATTSVRRSSSSAKERQRAERQQLTRLLKESP. The span at 39–50 shows a compositional bias: low complexity; that stretch reads TATTSVRRSSSS. The segment covering 51–70 has biased composition (basic and acidic residues); the sequence is AKERQRAERQQLTRLLKESP. Residues 518–691 enclose the N-acetyltransferase domain; the sequence is NPSIELADDP…GDVDDAKKRD (174 aa).

The protein belongs to the acetyltransferase family.

It localises to the mitochondrion. The enzyme catalyses L-glutamate + acetyl-CoA = N-acetyl-L-glutamate + CoA + H(+). The protein operates within amino-acid biosynthesis; L-arginine biosynthesis; N(2)-acetyl-L-ornithine from L-glutamate: step 1/4. Its function is as follows. N-acetylglutamate synthase involved in arginine biosynthesis. This chain is Amino-acid acetyltransferase, mitochondrial (arg2), found in Pyrenophora tritici-repentis (strain Pt-1C-BFP) (Wheat tan spot fungus).